Reading from the N-terminus, the 318-residue chain is MKPLNIIFAGTPDFAARHLQALINSHHNVIAVYTQPDRPAGRGKKLTASPVKELALSHSIPVYQPGSLRKEPAQQELASLNADIMVVVAYGLILPKVVLDTPRLGCINVHGSILPRWRGAAPIQRALWAGDKETGVTIMQMDVGLDTGDMLLKTYLPIEDDDTSASLYEKLALQGPDALLQALEGLANGTLAAEKQDETLANYAEKLSKEEARLDWTKSATQLWQEVRAFNPWPVSYFEHQGNTIKVWQTQVSTTSSTAAPGTIINASKKGIDVSTGDGVLTLLSMQLPGKKPLSVADILNARGEWFTPNTRLNNEAQ.

112 to 115 (SILP) is a (6S)-5,6,7,8-tetrahydrofolate binding site.

The protein belongs to the Fmt family.

The enzyme catalyses L-methionyl-tRNA(fMet) + (6R)-10-formyltetrahydrofolate = N-formyl-L-methionyl-tRNA(fMet) + (6S)-5,6,7,8-tetrahydrofolate + H(+). Its function is as follows. Attaches a formyl group to the free amino group of methionyl-tRNA(fMet). The formyl group appears to play a dual role in the initiator identity of N-formylmethionyl-tRNA by promoting its recognition by IF2 and preventing the misappropriation of this tRNA by the elongation apparatus. This is Methionyl-tRNA formyltransferase from Shewanella oneidensis (strain ATCC 700550 / JCM 31522 / CIP 106686 / LMG 19005 / NCIMB 14063 / MR-1).